The following is a 134-amino-acid chain: NADH-quinone oxidoreductase subunit A (134 aa).

A run of 3 helical transmembrane segments spans residues 12 to 32 (FAIY…LAAL), 64 to 84 (FYLV…LFAW), and 93 to 113 (WVGF…LVYL).

Belongs to the complex I subunit 3 family. NDH-1 is composed of 13 different subunits. Subunits NuoA, H, J, K, L, M, N constitute the membrane sector of the complex.

It is found in the cell inner membrane. It catalyses the reaction a quinone + NADH + 5 H(+)(in) = a quinol + NAD(+) + 4 H(+)(out). In terms of biological role, NDH-1 shuttles electrons from NADH, via FMN and iron-sulfur (Fe-S) centers, to quinones in the respiratory chain. The immediate electron acceptor for the enzyme in this species is believed to be ubiquinone. Couples the redox reaction to proton translocation (for every two electrons transferred, four hydrogen ions are translocated across the cytoplasmic membrane), and thus conserves the redox energy in a proton gradient. This chain is NADH-quinone oxidoreductase subunit A, found in Shewanella oneidensis (strain ATCC 700550 / JCM 31522 / CIP 106686 / LMG 19005 / NCIMB 14063 / MR-1).